Consider the following 299-residue polypeptide: 4-hydroxy-tetrahydrodipicolinate synthase (299 aa).

A pyruvate-binding site is contributed by T47. Y136 (proton donor/acceptor) is an active-site residue. The Schiff-base intermediate with substrate role is filled by K164. A205 contributes to the pyruvate binding site.

Belongs to the DapA family. As to quaternary structure, homotetramer; dimer of dimers.

It localises to the cytoplasm. It catalyses the reaction L-aspartate 4-semialdehyde + pyruvate = (2S,4S)-4-hydroxy-2,3,4,5-tetrahydrodipicolinate + H2O + H(+). It functions in the pathway amino-acid biosynthesis; L-lysine biosynthesis via DAP pathway; (S)-tetrahydrodipicolinate from L-aspartate: step 3/4. Its function is as follows. Catalyzes the condensation of (S)-aspartate-beta-semialdehyde [(S)-ASA] and pyruvate to 4-hydroxy-tetrahydrodipicolinate (HTPA). This chain is 4-hydroxy-tetrahydrodipicolinate synthase, found in Pediococcus pentosaceus (strain ATCC 25745 / CCUG 21536 / LMG 10740 / 183-1w).